The primary structure comprises 540 residues: NAD(P)H-quinone oxidoreductase subunit 2 B, chloroplastic (540 aa).

Transmembrane regions (helical) follow at residues 24–44 (LLLF…GLIL), 57–77 (IPWL…ALLF), 99–119 (IFQF…VEYI), 124–144 (MAIT…MFLC), 149–169 (FITI…LSGY), 183–203 (YLLM…WLYG), 227–247 (PGIS…LSPA), 325–345 (WHLL…LIAI), 353–373 (MLAY…IVGD), 384–404 (YMLF…LFGL), 425–445 (ALSL…AGFF), 448–468 (LYLF…IGLL), and 514–534 (MIVC…IIAI).

Belongs to the complex I subunit 2 family. In terms of assembly, NDH is composed of at least 16 different subunits, 5 of which are encoded in the nucleus.

The protein localises to the plastid. The protein resides in the chloroplast thylakoid membrane. It catalyses the reaction a plastoquinone + NADH + (n+1) H(+)(in) = a plastoquinol + NAD(+) + n H(+)(out). The enzyme catalyses a plastoquinone + NADPH + (n+1) H(+)(in) = a plastoquinol + NADP(+) + n H(+)(out). Its function is as follows. NDH shuttles electrons from NAD(P)H:plastoquinone, via FMN and iron-sulfur (Fe-S) centers, to quinones in the photosynthetic chain and possibly in a chloroplast respiratory chain. The immediate electron acceptor for the enzyme in this species is believed to be plastoquinone. Couples the redox reaction to proton translocation, and thus conserves the redox energy in a proton gradient. The polypeptide is NAD(P)H-quinone oxidoreductase subunit 2 B, chloroplastic (Coffea arabica (Arabian coffee)).